We begin with the raw amino-acid sequence, 852 residues long: Alanine--tRNA ligase (852 aa).

Zn(2+)-binding residues include histidine 554, histidine 558, cysteine 656, and histidine 660.

It belongs to the class-II aminoacyl-tRNA synthetase family. Zn(2+) serves as cofactor.

It is found in the cytoplasm. It carries out the reaction tRNA(Ala) + L-alanine + ATP = L-alanyl-tRNA(Ala) + AMP + diphosphate. Functionally, catalyzes the attachment of alanine to tRNA(Ala) in a two-step reaction: alanine is first activated by ATP to form Ala-AMP and then transferred to the acceptor end of tRNA(Ala). Also edits incorrectly charged Ser-tRNA(Ala) and Gly-tRNA(Ala) via its editing domain. This chain is Alanine--tRNA ligase, found in Campylobacter curvus (strain 525.92).